Reading from the N-terminus, the 59-residue chain is Small integral membrane protein 30 (59 aa).

Residues 1-24 (MTSVSTQLSLVLMSLLLVLPVVEA) form the signal peptide. The Extracellular portion of the chain corresponds to 25-29 (VEAGD). The helical transmembrane segment at 30-50 (AIALLLGVVLSITGICACLGV) threads the bilayer. Over 51–59 (YARKRNGQM) the chain is Cytoplasmic.

Interacts (via transmembrane domain) with antiviral protein MAVS (via transmembrane domain); the interaction disrupts MAVS interaction with RIGI and inhibits MAVS aggregation, resulting in the repression of type I interferon signaling and innate immune responses.

It is found in the endoplasmic reticulum membrane. It localises to the mitochondrion membrane. In terms of biological role, negatively regulates antiviral innate immune responses. Disrupts the interaction of antiviral protein MAVS with innate immune receptor RIGI and inhibits MAVS aggregation, resulting in the repression of type I interferon signaling and innate immune responses. This is Small integral membrane protein 30 from Homo sapiens (Human).